A 786-amino-acid chain; its full sequence is ATP-dependent RNA helicase SUPV3L1, mitochondrial (786 aa).

A mitochondrion-targeting transit peptide spans 1-22; it reads MSFSRALLWARLPAGRQAGHRA. Lys-99 carries the post-translational modification N6-acetyllysine. In terms of domain architecture, Helicase ATP-binding spans 194 to 334; sequence DARAMQRKII…AIDLVMELMY (141 aa). ATP is bound at residue 207 to 214; it reads GPTNSGKT. N6-acetyllysine is present on Lys-220. Residues 353 to 518 form the Helicase C-terminal domain; the sequence is VLDHALESLD…GLHPTAEQIE (166 aa). The interaction with LAMTOR5, important for protein stability stretch occupies residues 650–786; the sequence is PDASLIRDLQ…RRKKKEPDSD (137 aa). Disordered stretches follow at residues 690-730 and 749-786; these read GFPS…DAGE and KQLEKEWMTQQTEHNKEKTESGTHPKGTRRKKKEPDSD. A compositionally biased stretch (polar residues) spans 693–705; it reads SGSQSRLSGTLKS. Ser-725 carries the post-translational modification Phosphoserine. Basic and acidic residues predominate over residues 749-771; the sequence is KQLEKEWMTQQTEHNKEKTESGT.

It belongs to the helicase family. As to quaternary structure, homodimer; in free form. Component of the mitochondrial degradosome (mtEXO) complex which is a heteropentamer containing 2 copies of SUPV3L1 and 3 copies of PNPT1. As part of mitochondrial degradosome complex, interacts with GRSF1 in a RNA-dependent manner; the interaction enhances the activity of the complex. Interacts with LAMTOR5/HBXIP, WRN and BLM. The cofactor is Mg(2+). It depends on Mn(2+) as a cofactor. Broadly expressed.

It localises to the nucleus. It is found in the mitochondrion matrix. Its subcellular location is the mitochondrion nucleoid. It carries out the reaction ATP + H2O = ADP + phosphate + H(+). With respect to regulation, helicase activity toward DNA substrate is inhibited by micromolar concentrations of 5,6-dichloro-1-(beta-D-ribofuranosyl)benzotriazole (DRBT) and 4,5,6,7-tetrabromobenzotriazole (TBBT). Helicase activity toward RNA substrate is inhibited by elevated concentrations of TBBT. Inhibited by some ring-expanded nucleoside analogs. In terms of biological role, major helicase player in mitochondrial RNA metabolism. Component of the mitochondrial degradosome (mtEXO) complex, that degrades 3' overhang double-stranded RNA with a 3'-to-5' directionality in an ATP-dependent manner. Involved in the degradation of non-coding mitochondrial transcripts (MT-ncRNA) and tRNA-like molecules. ATPase and ATP-dependent multisubstrate helicase, able to unwind double-stranded (ds) DNA and RNA, and RNA/DNA heteroduplexes in the 5'-to-3' direction. Plays a role in the RNA surveillance system in mitochondria; regulates the stability of mature mRNAs, the removal of aberrantly formed mRNAs and the rapid degradation of non coding processing intermediates. Also implicated in recombination and chromatin maintenance pathways. May protect cells from apoptosis. Associates with mitochondrial DNA. This is ATP-dependent RNA helicase SUPV3L1, mitochondrial (SUPV3L1) from Homo sapiens (Human).